Here is a 127-residue protein sequence, read N- to C-terminus: Large ribosomal subunit protein bL17 (127 aa).

This sequence belongs to the bacterial ribosomal protein bL17 family. Part of the 50S ribosomal subunit. Contacts protein L32.

This is Large ribosomal subunit protein bL17 from Fervidobacterium nodosum (strain ATCC 35602 / DSM 5306 / Rt17-B1).